We begin with the raw amino-acid sequence, 323 residues long: tRNA U34 carboxymethyltransferase (323 aa).

Carboxy-S-adenosyl-L-methionine is bound by residues lysine 91, tryptophan 105, lysine 110, glycine 130, aspartate 152–threonine 154, isoleucine 181–glutamate 182, methionine 196, tyrosine 200, and arginine 315.

This sequence belongs to the class I-like SAM-binding methyltransferase superfamily. CmoB family. Homotetramer.

It catalyses the reaction carboxy-S-adenosyl-L-methionine + 5-hydroxyuridine(34) in tRNA = 5-carboxymethoxyuridine(34) in tRNA + S-adenosyl-L-homocysteine + H(+). Its function is as follows. Catalyzes carboxymethyl transfer from carboxy-S-adenosyl-L-methionine (Cx-SAM) to 5-hydroxyuridine (ho5U) to form 5-carboxymethoxyuridine (cmo5U) at position 34 in tRNAs. This chain is tRNA U34 carboxymethyltransferase, found in Escherichia coli O157:H7.